The chain runs to 607 residues: CRS2-associated factor 2, chloroplastic (607 aa).

A disordered region spans residues 1–75 (MSPPPPQRPS…GNGGNPAFRA (75 aa)). The N-terminal 79 residues, 1–79 (MSPPPPQRPS…NPAFRAPHLR (79 aa)), are a transit peptide targeting the chloroplast. 2 CRM domains span residues 228–324 (EPLT…TRPR) and 346–442 (EGLT…YPKP). Residues 482–505 (KMFELWTNAIESSVALMLDDAEVD) are CRS2 binding. Positions 550-576 (TEDEPETGTLEPQQHEFTESSDVAEDD) are disordered.

As to quaternary structure, interacts with CRS2 and RNA. Part of large ribonucleo-protein complexes that include group IIB introns, CRS2 and CAF2.

The protein resides in the plastid. The protein localises to the chloroplast stroma. Functionally, required for the splicing of group IIB introns in chloroplasts. Forms splicing particles with CRS2. Interacts with RNA and confers intron specificity of the splicing particles. The protein is CRS2-associated factor 2, chloroplastic of Oryza sativa subsp. japonica (Rice).